We begin with the raw amino-acid sequence, 335 residues long: Nod factor export ATP-binding protein I (335 aa).

The segment covering Met1–Glu10 has biased composition (basic and acidic residues). The interval Met1–Pro22 is disordered. One can recognise an ABC transporter domain in the interval Ile37–Tyr267. Gly69–Ser76 contributes to the ATP binding site.

This sequence belongs to the ABC transporter superfamily. Lipooligosaccharide exporter (TC 3.A.1.102) family. In terms of assembly, the complex is composed of two ATP-binding proteins (NodI) and two transmembrane proteins (NodJ).

The protein resides in the cell inner membrane. In terms of biological role, part of the ABC transporter complex NodIJ involved in the export of the nodulation factors (Nod factors), the bacterial signal molecules that induce symbiosis and subsequent nodulation induction. Nod factors are LCO (lipo-chitin oligosaccharide), a modified beta-1,4-linked N-acetylglucosamine oligosaccharide. This subunit is responsible for energy coupling to the transport system. In Rhizobium meliloti (Ensifer meliloti), this protein is Nod factor export ATP-binding protein I.